A 587-amino-acid chain; its full sequence is Branchpoint-bridging protein (587 aa).

Residues 1 to 16 (MLNSRSVGSTGSNNTP) are compositionally biased toward polar residues. Disordered stretches follow at residues 1-64 (MLNS…DGRG) and 121-142 (GDVVPHHRERSPSPPPQYDNHG). The span at 44-64 (DSYKSNSRMDHRPDGYHDGRG) shows a compositional bias: basic and acidic residues. Ser131 and Ser133 each carry phosphoserine. The KH domain occupies 191 to 271 (YVPVKDYPEI…DKINHAIKLI (81 aa)). 2 CCHC-type zinc fingers span residues 309-326 (QVCQNCGNVGHRRFDCPE) and 334-351 (IVCRHCGSIGHIARDCPV). Disordered regions lie at residues 375-490 (GGGS…PGTS) and 551-587 (IPGATAPPGAPGSYNTSESSNLNAPPGVSMPNGYSNR). A compositionally biased stretch (polar residues) spans 379–399 (AISNGNGEPQKSIEFSESGAA). Positions 410–454 (AAASTSVSSSTSSPAPWAKPASSAAPSNPAPWQQPAAPQSAPALS) are enriched in low complexity. Composition is skewed to polar residues over residues 465–483 (QPTQQSAVQPSNLVPSQNA) and 563–573 (SYNTSESSNLN).

It belongs to the BBP/SF1 family. As to quaternary structure, U2AF large subunit (u2af59), U2AF small subunit (u2af23) and bpb1 interact to form a complex required for complex A formation.

Its subcellular location is the cytoplasm. It is found in the nucleus. In terms of biological role, necessary for the splicing of pre-mRNA. The BPB1(SF1)-u2af59-u2af23 complex has a role in the recognition of the branch site (5'-UACUAAC-3'), the pyrimidine tract and the 3'-splice site at the 3'-end of introns. The sequence is that of Branchpoint-bridging protein (bpb1) from Schizosaccharomyces pombe (strain 972 / ATCC 24843) (Fission yeast).